The chain runs to 395 residues: Putative transport protein sll0063 (395 aa).

The next 8 membrane-spanning stretches (helical) occupy residues 24 to 44 (LNAI…VLNA), 50 to 70 (IFGY…IAFL), 91 to 111 (FVFL…IPLA), 180 to 200 (VFTV…FYLL), 245 to 265 (ALGL…LFGL), 269 to 289 (VMAL…FLVA), 295 to 315 (MALQ…NGIA), and 328 to 348 (FWVL…GVIV).

It belongs to the autoinducer-2 exporter (AI-2E) (TC 2.A.86) family.

Its subcellular location is the cell membrane. The sequence is that of Putative transport protein sll0063 from Synechocystis sp. (strain ATCC 27184 / PCC 6803 / Kazusa).